The primary structure comprises 157 residues: Small ribosomal subunit protein uS7 (157 aa).

This sequence belongs to the universal ribosomal protein uS7 family. As to quaternary structure, part of the 30S ribosomal subunit. Contacts proteins S9 and S11.

Functionally, one of the primary rRNA binding proteins, it binds directly to 16S rRNA where it nucleates assembly of the head domain of the 30S subunit. Is located at the subunit interface close to the decoding center, probably blocks exit of the E-site tRNA. The polypeptide is Small ribosomal subunit protein uS7 (Psychrobacter cryohalolentis (strain ATCC BAA-1226 / DSM 17306 / VKM B-2378 / K5)).